Here is a 165-residue protein sequence, read N- to C-terminus: Putative protein FAM86C2P (165 aa).

The protein belongs to the class I-like SAM-binding methyltransferase superfamily. EEF2KMT family.

The protein is Putative protein FAM86C2P (FAM86C2P) of Homo sapiens (Human).